Consider the following 511-residue polypeptide: Steroid 17-alpha-hydroxylase/17,20 lyase (511 aa).

Cys-442 contacts heme.

This sequence belongs to the cytochrome P450 family. The cofactor is heme.

Its subcellular location is the endoplasmic reticulum membrane. The protein resides in the microsome membrane. It carries out the reaction a C21-steroid + reduced [NADPH--hemoprotein reductase] + O2 = a 17alpha-hydroxy-C21-steroid + oxidized [NADPH--hemoprotein reductase] + H2O + H(+). The catalysed reaction is progesterone + reduced [NADPH--hemoprotein reductase] + O2 = 17alpha-hydroxyprogesterone + oxidized [NADPH--hemoprotein reductase] + H2O + H(+). The enzyme catalyses pregnenolone + reduced [NADPH--hemoprotein reductase] + O2 = 17alpha-hydroxypregnenolone + oxidized [NADPH--hemoprotein reductase] + H2O + H(+). It catalyses the reaction 17alpha-hydroxyprogesterone + reduced [NADPH--hemoprotein reductase] + O2 = androst-4-ene-3,17-dione + acetate + oxidized [NADPH--hemoprotein reductase] + H2O + 2 H(+). It carries out the reaction 17alpha-hydroxyprogesterone + reduced [NADPH--hemoprotein reductase] + O2 = 16alpha,17alpha-dihydroxyprogesterone + oxidized [NADPH--hemoprotein reductase] + H2O + H(+). The catalysed reaction is 16alpha,17alpha-dihydroxyprogesterone + reduced [NADPH--hemoprotein reductase] + O2 = 6beta,16alpha,17alpha-trihydroxyprogesterone + oxidized [NADPH--hemoprotein reductase] + H2O + H(+). The enzyme catalyses 17alpha-hydroxypregnenolone + reduced [NADPH--hemoprotein reductase] + O2 = 3beta-hydroxyandrost-5-en-17-one + acetate + oxidized [NADPH--hemoprotein reductase] + H2O + 2 H(+). It catalyses the reaction 16alpha,17alpha-dihydroxypregnenolone + reduced [NADPH--hemoprotein reductase] + O2 = 3beta,16alpha-dihydroxy-androst-5-en-17-one + acetate + oxidized [NADPH--hemoprotein reductase] + H2O + 2 H(+). It carries out the reaction 3beta-hydroxyandrost-5-en-17-one + reduced [NADPH--hemoprotein reductase] + O2 = 3beta,16alpha-dihydroxy-androst-5-en-17-one + oxidized [NADPH--hemoprotein reductase] + H2O + H(+). The catalysed reaction is androst-4-ene-3,17-dione + reduced [NADPH--hemoprotein reductase] + O2 = 16alpha-hydroxyandrost-4-ene-3,17-dione + oxidized [NADPH--hemoprotein reductase] + H2O + H(+). It functions in the pathway steroid hormone biosynthesis. The protein operates within steroid biosynthesis; glucocorticoid biosynthesis. Regulated predominantly by intracellular cAMP levels. The 17,20-lyase activity is stimulated by cytochrome b5, which acts as an allosteric effector increasing the Vmax of the lyase activity. In terms of biological role, a cytochrome P450 monooxygenase involved in corticoid and androgen biosynthesis. Catalyzes 17-alpha hydroxylation of C21 steroids, which is common for both pathways. A second oxidative step, required only for androgen synthesis, involves an acyl-carbon cleavage. The 17-alpha hydroxy intermediates, as part of adrenal glucocorticoids biosynthesis pathway, are precursors of cortisol. Hydroxylates steroid hormones, pregnenolone and progesterone to form 17-alpha hydroxy metabolites, followed by the cleavage of the C17-C20 bond to form C19 steroids, dehydroepiandrosterone (DHEA) and androstenedione. Has 16-alpha hydroxylase activity. Catalyzes 16-alpha hydroxylation of 17-alpha hydroxy pregnenolone, followed by the cleavage of the C17-C20 bond to form 16-alpha-hydroxy DHEA. Also 16-alpha hydroxylates androgens, relevant for estriol synthesis. Mechanistically, uses molecular oxygen inserting one oxygen atom into a substrate, and reducing the second into a water molecule, with two electrons provided by NADPH via cytochrome P450 reductase (CPR; NADPH-ferrihemoprotein reductase). The sequence is that of Steroid 17-alpha-hydroxylase/17,20 lyase (CYP17A1) from Mesocricetus auratus (Golden hamster).